The sequence spans 159 residues: Glutamate-rich protein GrpA (159 aa).

The chain is Glutamate-rich protein GrpA (grpA) from Alkalihalophilus pseudofirmus (strain ATCC BAA-2126 / JCM 17055 / OF4) (Bacillus pseudofirmus).